The chain runs to 357 residues: Probable cinnamyl alcohol dehydrogenase (357 aa).

Residue C47 coordinates Zn(2+). T49 contributes to the NADP(+) binding site. Zn(2+) is bound by residues H69, E70, C100, C103, C106, C114, and C163. Residues T167, G188–G193, S211–K216, T251, G275, and S298–I300 contribute to the NADP(+) site.

It belongs to the zinc-containing alcohol dehydrogenase family. As to quaternary structure, homodimer. Zn(2+) serves as cofactor.

It catalyses the reaction (E)-cinnamyl alcohol + NADP(+) = (E)-cinnamaldehyde + NADPH + H(+). It carries out the reaction (E)-coniferol + NADP(+) = (E)-coniferaldehyde + NADPH + H(+). The enzyme catalyses (E)-sinapyl alcohol + NADP(+) = (E)-sinapaldehyde + NADPH + H(+). The catalysed reaction is (E)-4-coumaroyl alcohol + NADP(+) = (E)-4-coumaraldehyde + NADPH + H(+). It catalyses the reaction (E)-caffeyl alcohol + NADP(+) = (E)-caffeyl aldehyde + NADPH + H(+). It functions in the pathway aromatic compound metabolism; phenylpropanoid biosynthesis. Its function is as follows. Involved in lignin biosynthesis. Catalyzes the final step specific for the production of lignin monomers. Catalyzes the NADPH-dependent reduction of coniferaldehyde, 5-hydroxyconiferaldehyde, sinapaldehyde, 4-coumaraldehyde and caffeyl aldehyde to their respective alcohols. This is Probable cinnamyl alcohol dehydrogenase from Populus deltoides (Eastern poplar).